The primary structure comprises 502 residues: UPF0371 protein CLB_0371 (502 aa).

The protein belongs to the UPF0371 family.

This Clostridium botulinum (strain ATCC 19397 / Type A) protein is UPF0371 protein CLB_0371.